Consider the following 375-residue polypeptide: 4-hydroxy-3-methylbut-2-en-1-yl diphosphate synthase (flavodoxin) (375 aa).

[4Fe-4S] cluster-binding residues include Cys270, Cys273, Cys305, and Glu312.

Belongs to the IspG family. Requires [4Fe-4S] cluster as cofactor.

It catalyses the reaction (2E)-4-hydroxy-3-methylbut-2-enyl diphosphate + oxidized [flavodoxin] + H2O + 2 H(+) = 2-C-methyl-D-erythritol 2,4-cyclic diphosphate + reduced [flavodoxin]. It participates in isoprenoid biosynthesis; isopentenyl diphosphate biosynthesis via DXP pathway; isopentenyl diphosphate from 1-deoxy-D-xylulose 5-phosphate: step 5/6. Its function is as follows. Converts 2C-methyl-D-erythritol 2,4-cyclodiphosphate (ME-2,4cPP) into 1-hydroxy-2-methyl-2-(E)-butenyl 4-diphosphate. The chain is 4-hydroxy-3-methylbut-2-en-1-yl diphosphate synthase (flavodoxin) from Shigella flexneri serotype 5b (strain 8401).